The chain runs to 1174 residues: MPLPFGLKLKRTRRYTVSSKSCLVARIQLLNNEFVEFTLSVESTGQESLEAVAQRLELREVTYFSLWYYNKQNQRRWVDLEKPLKKQLDKYALEPTVYFGVVFYVPSVSQLQQEITRYQYYLQLKKDILEGSIPCTLEQAIQLAGLAVQADFGDFDQYESQDFLQKFALFPVGWLQDEKVLEEATQKVALLHQKYRGLTAPDAEMLYMQEVERMDGYGEESYPAKDSQGSDISIGACLEGIFVKHKNGRHPVVFRWHDIANMSHNKSFFALELANKEETIQFQTEDMETAKYIWRLCVARHKFYRLNQCNLQTQTVTVNPIRRRSSSRMSLPKPQPYVMPPPPQLHYNGHYTEPYASSQDNLFVPNQNGYYCHSQTSLDRAQIDLNGRIRNGSVYSAHSTNSLNNPQPYLQPSPMSSNPSITGSDVMRPDYLPSHRHSAVIPPSYRPTPDYETVMKQLNRGLVHAERQSHSLRNLNIGSSYAYSRPAALVYSQPEIREHAQLPSPAAAHCPFSLSYSFHSPSPYPYPAERRPVVGAVSVPELTNAQLQAQDYPSPNIMRTQVYRPPPPYPPPRPANSTPDLSRHLYISSSNPDLITRRVHHSVQTFQEDSLPVAHSLQEVSEPLTAARHAQLHKRNSIEVAGLSHGLEGLRLKERTLSASAAEVAPRAVSVGSQPSVFTERTQREGPEEAEGLRYGHKKSLSDATMLIHSSEEEEDEDFEEESGARAPPARAREPRPGLAQDPPGCPRVLLAGPLHILEPKAHVPDAEKRMMDSSPVRTTAEAQRPWRDGLLMPSMSESDLTTSGRYRARRDSLKKRPVSDLLSGKKNIVEGLPPLGGMKKTRVDAKKIGPLKLAALNGLSLSRVPLPDEGKEVATRATNDERCKILEQRLEQGMVFTEYERILKKRLVDGECSTARLPENAERNRFQDVLPYDDVRVELVPTKENNTGYINASHIKVSVSGIEWDYIATQGPLQNTCQDFWQMVWEQGIAIIAMVTAEEEGGREKSFRYWPRLGSRHNTVTYGRFKITTRFRTDSGCYATTGLKMKHLLTGQERTVWHLQYTDWPEHGCPEDLKGFLSYLEEIQSVRRHTNSTSDPQSPNPPLLVHCSAGVGRTGVVILSEIMIACLEHNEVLDIPRVLDMLRQQRMMLVQTLCQYTFVYRVLIQFLKSSRLI.

The 286-residue stretch at 23-308 (LVARIQLLNN…ARHKFYRLNQ (286 aa)) folds into the FERM domain. Residues 396 to 423 (SAHSTNSLNNPQPYLQPSPMSSNPSITG) are compositionally biased toward polar residues. A disordered region spans residues 396-445 (SAHSTNSLNNPQPYLQPSPMSSNPSITGSDVMRPDYLPSHRHSAVIPPSY). Ser-577, Ser-589, Ser-590, Ser-637, and Ser-673 each carry phosphoserine. A disordered region spans residues 673–692 (SQPSVFTERTQREGPEEAEG). The segment covering 681 to 692 (RTQREGPEEAEG) has biased composition (basic and acidic residues). Phosphoserine is present on residues Ser-710 and Ser-711. Disordered stretches follow at residues 711-745 (SEEE…DPPG) and 769-806 (KRMM…TSGR). Acidic residues predominate over residues 712 to 722 (EEEEDEDFEEE). Residues 796 to 805 (MSESDLTTSG) show a composition bias toward polar residues. 3 positions are modified to phosphoserine: Ser-797, Ser-799, and Ser-804. The Tyrosine-protein phosphatase domain occupies 896-1167 (VFTEYERILK…TFVYRVLIQF (272 aa)). Substrate-binding positions include Glu-1067, 1108-1114 (CSAGVGR), and Gln-1152. Cys-1108 functions as the Phosphocysteine intermediate in the catalytic mechanism.

It belongs to the protein-tyrosine phosphatase family. Non-receptor class subfamily.

It localises to the cytoplasm. The protein localises to the cytoskeleton. The catalysed reaction is O-phospho-L-tyrosyl-[protein] + H2O = L-tyrosyl-[protein] + phosphate. The chain is Tyrosine-protein phosphatase non-receptor type 21 (PTPN21) from Homo sapiens (Human).